A 292-amino-acid polypeptide reads, in one-letter code: uncharacterized protein (292 aa).

The N-terminal stretch at 1–21 is a signal peptide; sequence MNSNSNKKRDPARFPAGVAQG. Residues 1 to 30 form a disordered region; sequence MNSNSNKKRDPARFPAGVAQGCSTTRAGDL.

This is an uncharacterized protein from Treponema pallidum (strain Nichols).